Reading from the N-terminus, the 319-residue chain is EDEAPKMCGVTQNWESYEPIKKASQSNLTPAHQRYIELVIVADHGMFTKYNGDSDKIREWVRQMVNTVDEIYSYMYIDVALAGLEIWSNEDLINVQPAAPHTLDSFGKWRERDLLHRIHHDNAMLLTAIDFDGPTIGLAYVGTMCKPKGSTGVVQDHSTINLRVAVTMAHEIGHNLGIHHDTGSCSCGGYSCIMSPVISHEPSKYFSDCSYTQCWDFIMNQKPQCILNKPLRTDTVSTPVSGNELLEAGEECDCGSPGNPCCDAATCKLRQGAQCAEGLCCDQCRFMKKGTVCRIARGDDMDDYCNGISAGCPRNPFHA.

Positions 1 to 28 (EDEAPKMCGVTQNWESYEPIKKASQSNL) are excised as a propeptide. In terms of domain architecture, Peptidase M12B spans 34 to 230 (RYIELVIVAD…QKPQCILNKP (197 aa)). The Ca(2+) site is built by E37 and D121. 3 cysteine pairs are disulfide-bonded: C145–C225, C185–C209, and C187–C192. Position 170 (H170) interacts with Zn(2+). E171 is an active-site residue. Residues H174 and H180 each contribute to the Zn(2+) site. C225 and N228 together coordinate Ca(2+). Positions 231-246 (LRTDTVSTPVSGNELL) are excised as a propeptide. Residues 238–319 (TPVSGNELLE…AGCPRNPFHA (82 aa)) enclose the Disintegrin domain. 6 disulfides stabilise this stretch: C252-C267, C254-C262, C261-C284, C275-C281, C280-C305, and C293-C312. The Cell attachment site motif lies at 297-299 (RGD).

Belongs to the venom metalloproteinase (M12B) family. P-II subfamily. P-IIa sub-subfamily. In terms of assembly, monomer. Zn(2+) is required as a cofactor. As to expression, expressed by the venom gland.

It is found in the secreted. Excess of calcium ions significantly suppress the autoproteolysis of the enzyme. In terms of biological role, metalloproteinase that impairs hemostasis in the envenomed animal. Shows autoproteolysis dependent on pH and temperature. Does not show hemorrhagic activity. Inhibits platelet aggregation induced by ADP (IC(50) is 200 nM), collagen (IC(50) is 500 nM), thrombin and epinephrin (IC(50) is 300 nM). Does not inhibit aggregation induced by ristocetin. Functionally, inhibits platelet aggregation induced by ADP (IC(50) is 100 nM), collagen (IC(50) is 500 nM), thrombin and epinephrin (IC(50) is 300 nM). Does not inhibit aggregation induced by ristocetin. Significantly inhibits angiogenesis both in vivo and in vitro. This chain is Zinc metalloproteinase/disintegrin, found in Gloydius brevicauda (Korean slamosa snake).